A 287-amino-acid chain; its full sequence is Ret finger protein-like 4A-like protein 1 (287 aa).

An RING-type; degenerate zinc finger spans residues 11 to 53 (CPVCLKDLEEAVQLKCGYACCLQCLNSLQKEPDGEGLLCRFCS). In terms of domain architecture, B30.2/SPRY spans 78–276 (EPKLKSVLTM…LSICSVINPS (199 aa)).

The protein is Ret finger protein-like 4A-like protein 1 (RFPL4AL1) of Homo sapiens (Human).